We begin with the raw amino-acid sequence, 130 residues long: Small ribosomal subunit protein uS9 (130 aa).

The protein belongs to the universal ribosomal protein uS9 family.

This Shewanella halifaxensis (strain HAW-EB4) protein is Small ribosomal subunit protein uS9.